The following is a 227-amino-acid chain: PKHD-type hydroxylase PHZ_c0292 (227 aa).

A Fe2OG dioxygenase domain is found at 78-178 (VVFPPLFNRY…RVCSFFWIQS (101 aa)). Fe cation is bound by residues His96, Asp98, and His159. Arg169 serves as a coordination point for 2-oxoglutarate.

The cofactor is Fe(2+). L-ascorbate is required as a cofactor.

This is PKHD-type hydroxylase PHZ_c0292 from Phenylobacterium zucineum (strain HLK1).